We begin with the raw amino-acid sequence, 111 residues long: Small ribosomal subunit protein uS10 (111 aa).

This sequence belongs to the universal ribosomal protein uS10 family. As to quaternary structure, part of the 30S ribosomal subunit.

Functionally, involved in the binding of tRNA to the ribosomes. The chain is Small ribosomal subunit protein uS10 from Xanthomonas euvesicatoria pv. vesicatoria (strain 85-10) (Xanthomonas campestris pv. vesicatoria).